The following is a 134-amino-acid chain: Mini-ribonuclease 3 (134 aa).

The active site involves Asp23.

The protein belongs to the MrnC RNase family. Homodimer. The cofactor is Mg(2+).

The protein resides in the cytoplasm. Functionally, involved in correct processing of both the 5' and 3' ends of 23S rRNA precursor. Processes 30S rRNA precursor transcript even in absence of ribonuclease 3 (Rnc); Rnc processes 30S rRNA into smaller rRNA precursors. This chain is Mini-ribonuclease 3, found in Brevibacillus brevis (strain 47 / JCM 6285 / NBRC 100599).